The chain runs to 215 residues: Urease accessory protein UreG (215 aa).

The disordered stretch occupies residues 1–21 (MNAPASSPARRTKKLPPLRVG). 24–31 (GPVGSGKT) provides a ligand contact to GTP.

It belongs to the SIMIBI class G3E GTPase family. UreG subfamily. As to quaternary structure, homodimer. UreD, UreF and UreG form a complex that acts as a GTP-hydrolysis-dependent molecular chaperone, activating the urease apoprotein by helping to assemble the nickel containing metallocenter of UreC. The UreE protein probably delivers the nickel.

The protein localises to the cytoplasm. In terms of biological role, facilitates the functional incorporation of the urease nickel metallocenter. This process requires GTP hydrolysis, probably effectuated by UreG. The sequence is that of Urease accessory protein UreG from Burkholderia vietnamiensis (strain G4 / LMG 22486) (Burkholderia cepacia (strain R1808)).